The chain runs to 35 residues: Cytochrome b6-f complex subunit 7 (35 aa).

Residues 9 to 27 form a helical membrane-spanning segment; that stretch reads AGLSIVLTLVGVALGYGIL.

The protein belongs to the PetM family. In terms of assembly, the 4 large subunits of the cytochrome b6-f complex are cytochrome b6, subunit IV (17 kDa polypeptide, PetD), cytochrome f and the Rieske protein, while the 4 small subunits are PetG, PetL, PetM and PetN. The complex functions as a dimer.

The protein localises to the cellular thylakoid membrane. Its function is as follows. Component of the cytochrome b6-f complex, which mediates electron transfer between photosystem II (PSII) and photosystem I (PSI), cyclic electron flow around PSI, and state transitions. This Synechococcus sp. (strain JA-3-3Ab) (Cyanobacteria bacterium Yellowstone A-Prime) protein is Cytochrome b6-f complex subunit 7.